The chain runs to 950 residues: Oxysterol-binding protein-related protein 1 (950 aa).

The segment at 1 to 237 (MNTEAEQQLL…NKVIYKALKR (237 aa)) is interaction with RAB7A. ANK repeat units lie at residues 47-76 (LGWT…EVNV), 80-109 (MGDT…DTTI), and 175-204 (LGNT…DPNL). The 100-residue stretch at 235–334 (LKRYEGPLWK…WLEAIEEHSA (100 aa)) folds into the PH domain. A coiled-coil region spans residues 430–463 (NFKLEQEQEKNKILSEALETLATEHHELEQSLVK). The FFAT signature appears at 469–485 (SILSEDEFYDALSDSES). At Ser-499 the chain carries Phosphoserine. The segment covering 501-521 (EEEGEHLGSRKHRMSEEKDCG) has biased composition (basic and acidic residues). Disordered regions lie at residues 501 to 527 (EEEG…DALS), 795 to 816 (KKNT…LDEM), and 881 to 913 (MENG…SEED). The stretch at 877–913 (DIRAMENGEIDQASEEKKRLEEKQRAARKNRSKSEED) forms a coiled coil. Residues 890–901 (SEEKKRLEEKQR) are compositionally biased toward basic and acidic residues.

Belongs to the OSBP family. As to quaternary structure, interacts (via FFAT motif) with VAPA and VAPB. Interacts with the GTP-bound form of RAB7A. Interacts with OAS1B. Interacts (via FFAT motif) with MOSPD2 (via MSP domain).

The protein resides in the late endosome. Binds phospholipids; exhibits strong binding to phosphatidic acid and weak binding to phosphatidylinositol 3-phosphate. Stabilizes GTP-bound RAB7A on late endosomes/lysosomes and alters functional properties of late endocytic compartments via its interaction with RAB7A. Binds 25-hydroxycholesterol and cholesterol. The protein is Oxysterol-binding protein-related protein 1 of Homo sapiens (Human).